The sequence spans 78 residues: Large ribosomal subunit protein bL28 (78 aa).

Residues 1–20 (MSRVCQVTGKGPVTGNNISH) are disordered.

Belongs to the bacterial ribosomal protein bL28 family.

The polypeptide is Large ribosomal subunit protein bL28 (Pseudomonas putida (strain W619)).